A 734-amino-acid polypeptide reads, in one-letter code: PI-PLC X-box domain-containing protein DDB_G0293730 (734 aa).

Residues 8-70 adopt a coiled-coil conformation; it reads IKNILLKIEK…ELNEKLIVEK (63 aa). The PI-PLC X-box domain occupies 440-604; sequence KLKDRKVRNL…CIYDDLVNPL (165 aa).

This Dictyostelium discoideum (Social amoeba) protein is PI-PLC X-box domain-containing protein DDB_G0293730.